The primary structure comprises 340 residues: HPr kinase/phosphorylase (340 aa).

Active-site residues include His-153 and Lys-174. Position 168-175 (168-175) interacts with ATP; that stretch reads GRSGIGKS. Residue Ser-175 coordinates Mg(2+). Asp-192 acts as the Proton acceptor; for phosphorylation activity. Proton donor; for dephosphorylation activity in catalysis. Residues 216–225 are important for the catalytic mechanism of both phosphorylation and dephosphorylation; that stretch reads MEIRGLGIID. Residue Glu-217 participates in Mg(2+) binding. The active site involves Arg-258. The important for the catalytic mechanism of dephosphorylation stretch occupies residues 279–284; it reads PIYPGK.

The protein belongs to the HPrK/P family. Homohexamer. Mg(2+) is required as a cofactor.

The catalysed reaction is [HPr protein]-L-serine + ATP = [HPr protein]-O-phospho-L-serine + ADP + H(+). The enzyme catalyses [HPr protein]-O-phospho-L-serine + phosphate + H(+) = [HPr protein]-L-serine + diphosphate. Its function is as follows. Catalyzes the ATP- as well as the pyrophosphate-dependent phosphorylation of a specific serine residue in HPr, a phosphocarrier protein of the phosphoenolpyruvate-dependent sugar phosphotransferase system (PTS). HprK/P also catalyzes the pyrophosphate-producing, inorganic phosphate-dependent dephosphorylation (phosphorolysis) of seryl-phosphorylated HPr (P-Ser-HPr). The sequence is that of HPr kinase/phosphorylase from Chloroherpeton thalassium (strain ATCC 35110 / GB-78).